Here is a 93-residue protein sequence, read N- to C-terminus: Peptide YY-like (93 aa).

Positions 1–27 (MVSPRVRLAALALSVCAILCLGMHASA) are cleaved as a signal peptide. A Tyrosine amide modification is found at Y63. A propeptide spans 65–93 (KRALTPENWIYRDPAEERVTYGLDDYAMW) (C-terminal extension).

It belongs to the NPY family. As to expression, gut and medial reticulospinal neuron system in the brainstem.

Its subcellular location is the secreted. Functionally, gastrointestinal hormone and neuropeptide. The chain is Peptide YY-like (pyy) from Lampetra fluviatilis (European river lamprey).